The chain runs to 121 residues: Large ribosomal subunit protein bL12 (121 aa).

This sequence belongs to the bacterial ribosomal protein bL12 family. As to quaternary structure, homodimer. Part of the ribosomal stalk of the 50S ribosomal subunit. Forms a multimeric L10(L12)X complex, where L10 forms an elongated spine to which 2 to 4 L12 dimers bind in a sequential fashion. Binds GTP-bound translation factors.

Functionally, forms part of the ribosomal stalk which helps the ribosome interact with GTP-bound translation factors. Is thus essential for accurate translation. This chain is Large ribosomal subunit protein bL12, found in Pseudomonas fluorescens (strain ATCC BAA-477 / NRRL B-23932 / Pf-5).